Reading from the N-terminus, the 306-residue chain is Acetyl-coenzyme A carboxylase carboxyl transferase subunit beta (306 aa).

One can recognise a CoA carboxyltransferase N-terminal domain in the interval 28 to 297 (LWIKCPDTGQ…TPAGKPSTPV (270 aa)). Residues 287–306 (QTPAGKPSTPVAPEPVPDAA) form a disordered region. Residues 296–306 (PVAPEPVPDAA) are compositionally biased toward pro residues.

The protein belongs to the AccD/PCCB family. Acetyl-CoA carboxylase is a heterohexamer composed of biotin carboxyl carrier protein (AccB), biotin carboxylase (AccC) and two subunits each of ACCase subunit alpha (AccA) and ACCase subunit beta (AccD).

It localises to the cytoplasm. The enzyme catalyses N(6)-carboxybiotinyl-L-lysyl-[protein] + acetyl-CoA = N(6)-biotinyl-L-lysyl-[protein] + malonyl-CoA. The protein operates within lipid metabolism; malonyl-CoA biosynthesis; malonyl-CoA from acetyl-CoA: step 1/1. Its function is as follows. Component of the acetyl coenzyme A carboxylase (ACC) complex. Biotin carboxylase (BC) catalyzes the carboxylation of biotin on its carrier protein (BCCP) and then the CO(2) group is transferred by the transcarboxylase to acetyl-CoA to form malonyl-CoA. The polypeptide is Acetyl-coenzyme A carboxylase carboxyl transferase subunit beta (Methylorubrum populi (strain ATCC BAA-705 / NCIMB 13946 / BJ001) (Methylobacterium populi)).